We begin with the raw amino-acid sequence, 226 residues long: MSTLGLLLILLGIIITCTFVILRSVNPIYSILNLIVIYGCYASILLTVEMEFLACIYILVNVGAIAVLFLFIVMMININIVEIQETMKKYNIYMFVGFIGLIGIMGILITNYQIRIKEEVIADFSMFLLNTEITTLQATPSYLDFYELFVETTDLRAMGSNVIYGSQSIWFIMACIILLIGMVGVIYITEDLIIEKRKLNARRRQDINSQVLREYKITIKNYREIK.

A run of 5 helical transmembrane segments spans residues Ser2 to Leu22, Ile28 to Val48, Ile56 to Ile76, Tyr90 to Thr110, and Ile169 to Thr189.

The protein belongs to the complex I subunit 6 family.

It localises to the mitochondrion membrane. The enzyme catalyses a ubiquinone + NADH + 5 H(+)(in) = a ubiquinol + NAD(+) + 4 H(+)(out). Its function is as follows. Core subunit of the mitochondrial membrane respiratory chain NADH dehydrogenase (Complex I) that is believed to belong to the minimal assembly required for catalysis. Complex I functions in the transfer of electrons from NADH to the respiratory chain. The immediate electron acceptor for the enzyme is believed to be ubiquinone. In Dictyostelium citrinum (Slime mold), this protein is NADH-ubiquinone oxidoreductase chain 6 (nad6).